Here is a 664-residue protein sequence, read N- to C-terminus: Macoilin (664 aa).

4 consecutive transmembrane segments (helical) span residues 28–48, 75–95, 120–140, and 154–174; these read TFLY…DFVV, AFSV…LLFI, VCLP…AIRF, and FAAH…KSYV. Over residues 253-265 the composition is skewed to basic and acidic residues; that stretch reads REKGKEKDKDAKK. Residues 253–274 are disordered; the sequence is REKGKEKDKDAKKHNLGINNNN. S305 carries the phosphoserine modification. Residues 320–348 show a composition bias toward polar residues; the sequence is KNYKNASGVVNSSPRSHSATNGSIPSSSS. The disordered stretch occupies residues 320 to 375; the sequence is KNYKNASGVVNSSPRSHSATNGSIPSSSSKNEKKQKCTSKSPSTHKDLMENCIPNN. N-linked (GlcNAc...) asparagine glycosylation is present at N324. Position 332 is a phosphoserine (S332). N-linked (GlcNAc...) asparagine glycosylation is found at N340 and N452. The interval 630–664 is disordered; it reads TSPLSPVSPHYSSKFVETSPSGLDPNASVYQPLKK. Phosphoserine occurs at positions 631 and 634. N655 is a glycosylation site (N-linked (GlcNAc...) asparagine).

This sequence belongs to the macoilin family.

The protein resides in the rough endoplasmic reticulum membrane. It is found in the nucleus membrane. Its function is as follows. Plays a role in the regulation of neuronal activity. This chain is Macoilin (MACO1), found in Pan troglodytes (Chimpanzee).